The following is an 89-amino-acid chain: Small ribosomal subunit protein bS20 (89 aa).

A compositionally biased stretch (basic residues) spans 1–12 (MANIKSAKKRAK). Positions 1–24 (MANIKSAKKRAKQTVVRNERNTGQ) are disordered.

It belongs to the bacterial ribosomal protein bS20 family.

Its function is as follows. Binds directly to 16S ribosomal RNA. The protein is Small ribosomal subunit protein bS20 of Xanthomonas campestris pv. campestris (strain 8004).